A 116-amino-acid chain; its full sequence is Putative oxygen-evolving enhancer protein 1 (116 aa).

Belongs to the PsbO family.

Its subcellular location is the plastid. It is found in the chloroplast thylakoid membrane. Stabilizes the manganese cluster which is the primary site of water splitting. In Pinus strobus (Eastern white pine), this protein is Putative oxygen-evolving enhancer protein 1.